The following is a 365-amino-acid chain: DNA replication and repair protein RecF (365 aa).

23–30 (GPNGIGKS) contacts ATP.

This sequence belongs to the RecF family.

Its subcellular location is the cytoplasm. The RecF protein is involved in DNA metabolism; it is required for DNA replication and normal SOS inducibility. RecF binds preferentially to single-stranded, linear DNA. It also seems to bind ATP. This chain is DNA replication and repair protein RecF, found in Parasynechococcus marenigrum (strain WH8102).